Here is a 252-residue protein sequence, read N- to C-terminus: Cell division protein ZapD (252 aa).

The protein belongs to the ZapD family. In terms of assembly, interacts with FtsZ.

The protein resides in the cytoplasm. Cell division factor that enhances FtsZ-ring assembly. Directly interacts with FtsZ and promotes bundling of FtsZ protofilaments, with a reduction in FtsZ GTPase activity. In Dechloromonas aromatica (strain RCB), this protein is Cell division protein ZapD.